The sequence spans 550 residues: Forkhead box protein N4 (550 aa).

The segment at residues 231 to 327 is a DNA-binding region (fork-head); sequence KPIYSYSCLI…EEMQKWKRKD (97 aa). The span at 402–411 shows a compositional bias: low complexity; it reads LQNQSRLAPS. Residues 402–437 form a disordered region; sequence LQNQSRLAPSSPAPAQTPPLHTVPDMTNSSLPQHPA.

In terms of tissue distribution, isoform 1 is expressed mainly in adult thymus. Isoform 2 is detected in adult skin. Isoform 3 is expressed in adult brain and embryo. Prominent expression sites include the olfactory placode, the basal layer of the olfactory epithelium, the neuroepithelium of the developing retina, the germinal zone of the differentiated eye, regions of motoneuron development in the neural tube and periventricular regions of the brain.

The protein resides in the nucleus. In terms of biological role, transcription factor essential for neural and some non-neural tissues development. Binds to an 11-bp consensus sequence containing the invariant tetranucleotide 5'-ACGC-3'. During development of the central nervous system, required to specify the amacrine and horizontal cell fates from multipotent retinal progenitors while suppressing the alternative photoreceptor cell fates. Drives commitment of p2 progenitors to the V2b interneuron fates during spinal cord neurogenesis. In development of non-neural tissues, plays an essential role in the specification of the atrioventricular canal. The protein is Forkhead box protein N4 (foxn4) of Danio rerio (Zebrafish).